The chain runs to 296 residues: 4-amino-4-deoxyprephenate dehydrogenase (296 aa).

Residues 9-288 (RCVVVGGAGA…EHGAELERLC (280 aa)) enclose the Prephenate/arogenate dehydrogenase domain.

It belongs to the prephenate/arogenate dehydrogenase family.

The enzyme catalyses 4-amino-4-deoxyprephenate + NAD(+) = 3-(4-aminophenyl)pyruvate + CO2 + NADH + H(+). The protein operates within antibiotic biosynthesis. Its function is as follows. Involved in pristinamycin I biosynthesis. Probably catalyzes the formation of 3-(4-aminophenyl)pyruvate from 4-amino-4-deoxyprephenate. In Streptomyces pristinaespiralis, this protein is 4-amino-4-deoxyprephenate dehydrogenase.